A 659-amino-acid chain; its full sequence is ATP-binding cassette sub-family D member 3 (659 aa).

The tract at residues 1–61 (MAAFSKYLTA…GKKERAVVDK (61 aa)) is interaction with PEX19. Asn12 carries an N-linked (GlcNAc...) asparagine glycan. At Lys61 the chain carries N6-acetyllysine. The chain crosses the membrane as a helical span at residues 84 to 104 (GYLLLIAVMLVSRTYCDVWMI). The ABC transmembrane type-1 domain occupies 85–372 (YLLLIAVMLV…MLLRMSQALG (288 aa)). Residue Asn106 is glycosylated (N-linked (GlcNAc...) asparagine). A helical membrane pass occupies residues 126–146 (LFNFIAAMPLISLVNNFLKYG). The N-linked (GlcNAc...) asparagine glycan is linked to Asn206. Residues 224 to 244 (AIGAQGPASMMAYLLVSGLFL) form a helical membrane-spanning segment. Lys260 bears the N6-acetyllysine mark. The chain crosses the membrane as a helical span at residues 313–333 (MGFIDSIIAKYVATVVGYLVV). At Lys399 the chain carries N6-acetyllysine. Ser424 carries the phosphoserine modification. Residues 434–659 (INTDNIIKFD…ITEDTVEFGS (226 aa)) form the ABC transporter domain. 473 to 480 (GPNGCGKS) is an ATP binding site. Position 533 is an N6-acetyllysine (Lys533). A Phosphoserine modification is found at Ser659.

It belongs to the ABC transporter superfamily. ABCD family. Peroxisomal fatty acyl CoA transporter (TC 3.A.1.203) subfamily. In terms of assembly, homodimers. Can form heterodimers with ABCD1 and ABCD2. Dimerization is necessary to form an active transporter. Interacts with PEX19; mediates the targeting of ABCD3 to peroxisomes. Post-translationally, ubiquitinated by PEX2 during pexophagy in response to starvation, leading to its degradation.

The protein localises to the peroxisome membrane. The enzyme catalyses a very long-chain fatty acyl-CoA + H2O = a very long-chain fatty acid + CoA + H(+). The catalysed reaction is a very long-chain fatty acid(in) + ATP + H2O = a very long-chain fatty acid(out) + ADP + phosphate + H(+). It carries out the reaction a long-chain fatty acyl-CoA + H2O = a long-chain fatty acid + CoA + H(+). It catalyses the reaction a long-chain fatty acid(in) + ATP + H2O = a long-chain fatty acid(out) + ADP + phosphate + H(+). The enzyme catalyses pristanoyl-CoA + H2O = 2,6,10,14-tetramethylpentadecanoate + CoA + H(+). The catalysed reaction is 2,6,10,14-tetramethylpentadecanoate(in) + ATP + H2O = 2,6,10,14-tetramethylpentadecanoate(out) + ADP + phosphate + H(+). It carries out the reaction hexadecanedioyl-CoA + H2O = hexadecanedioate + CoA + H(+). It catalyses the reaction hexadecanedioate(in) + ATP + H2O = hexadecanedioate(out) + ADP + phosphate + H(+). The enzyme catalyses (5Z,8Z,11Z,14Z,17Z)-eicosapentaenoyl-CoA + H2O = (5Z,8Z,11Z,14Z,17Z)-eicosapentaenoate + CoA + H(+). The catalysed reaction is (5Z,8Z,11Z,14Z,17Z)-eicosapentaenoate(in) + ATP + H2O = (5Z,8Z,11Z,14Z,17Z)-eicosapentaenoate(out) + ADP + phosphate + H(+). It carries out the reaction (4Z,7Z,10Z,13Z,16Z,19Z)-docosahexaenoyl-CoA + H2O = (4Z,7Z,10Z,13Z,16Z,19Z)-docosahexaenoate + CoA + H(+). It catalyses the reaction (4Z,7Z,10Z,13Z,16Z,19Z)-docosahexaenoate(in) + ATP + H2O = (4Z,7Z,10Z,13Z,16Z,19Z)-docosahexaenoate(out) + ADP + phosphate + H(+). Broad substrate specificity ATP-dependent transporter of the ATP-binding cassette (ABC) family that catalyzes the transport of long-chain fatty acids (LCFA)-CoA, dicarboxylic acids-CoA, long-branched-chain fatty acids-CoA and bile acids from the cytosol to the peroxisome lumen for beta-oxydation. Has fatty acyl-CoA thioesterase and ATPase activities. Probably hydrolyzes fatty acyl-CoAs into free fatty acids prior to their ATP-dependent transport into peroxisomes. Thus, play a role in regulation of LCFAs and energy metabolism namely, in the degradation and biosynthesis of fatty acids by beta-oxidation. In Mus musculus (Mouse), this protein is ATP-binding cassette sub-family D member 3 (Abcd3).